A 666-amino-acid polypeptide reads, in one-letter code: Putative cysteine-rich receptor-like protein kinase 31 (666 aa).

An N-terminal signal peptide occupies residues Met-1–Ala-23. Gnk2-homologous domains are found at residues Gln-24–Phe-130 and Leu-136–Tyr-245. At Gln-24 to Val-280 the chain is on the extracellular side. N-linked (GlcNAc...) asparagine glycans are attached at residues Asn-52, Asn-62, Asn-104, Asn-127, and Asn-151. The helical transmembrane segment at Ile-281–Ile-301 threads the bilayer. Residues Trp-302–Arg-666 lie on the Cytoplasmic side of the membrane. Positions Phe-339–Ile-616 constitute a Protein kinase domain. ATP is bound by residues Leu-345–Val-353 and Lys-367. Tyr-412 carries the phosphotyrosine modification. Asp-464 serves as the catalytic Proton acceptor. Ser-468 is subject to Phosphoserine. Thr-504 bears the Phosphothreonine mark. Phosphotyrosine is present on Tyr-512.

It belongs to the protein kinase superfamily. Ser/Thr protein kinase family. CRK subfamily.

Its subcellular location is the membrane. It catalyses the reaction L-seryl-[protein] + ATP = O-phospho-L-seryl-[protein] + ADP + H(+). The catalysed reaction is L-threonyl-[protein] + ATP = O-phospho-L-threonyl-[protein] + ADP + H(+). This is Putative cysteine-rich receptor-like protein kinase 31 (CRK31) from Arabidopsis thaliana (Mouse-ear cress).